A 199-amino-acid polypeptide reads, in one-letter code: Pneumococcal vaccine antigen A homolog (199 aa).

The protein resides in the cell surface. This chain is Pneumococcal vaccine antigen A homolog (pvaA), found in Streptococcus pyogenes serotype M6 (strain ATCC BAA-946 / MGAS10394).